A 339-amino-acid polypeptide reads, in one-letter code: Large ribosomal subunit protein uL10 (339 aa).

The interval 307–339 (VEEEKKEEKVEEEKEDEEASEEEALAGLSALFG) is disordered. The segment covering 308-318 (EEEKKEEKVEE) has biased composition (basic and acidic residues). Over residues 319-330 (EKEDEEASEEEA) the composition is skewed to acidic residues.

It belongs to the universal ribosomal protein uL10 family. Part of the 50S ribosomal subunit. Forms part of the ribosomal stalk which helps the ribosome interact with GTP-bound translation factors. Forms a heptameric L10(L12)2(L12)2(L12)2 complex, where L10 forms an elongated spine to which the L12 dimers bind in a sequential fashion.

Functionally, forms part of the ribosomal stalk, playing a central role in the interaction of the ribosome with GTP-bound translation factors. In Pyrococcus furiosus (strain ATCC 43587 / DSM 3638 / JCM 8422 / Vc1), this protein is Large ribosomal subunit protein uL10.